The primary structure comprises 141 residues: uncharacterized protein (141 aa).

The segment covering 1-39 (MNNNNNNNNNNNNNNNNNNNNNNNNNSYDSNHSSSSYTS) has biased composition (low complexity). Positions 1–48 (MNNNNNNNNNNNNNNNNNNNNNNNNNSYDSNHSSSSYTSENQNREQQF) are disordered. Residues 109–129 (FFCKIILVFICLVAIYSLVVI) traverse the membrane as a helical segment.

Its subcellular location is the membrane. This is an uncharacterized protein from Dictyostelium discoideum (Social amoeba).